A 936-amino-acid polypeptide reads, in one-letter code: Periplasmic nitrate reductase (936 aa).

A signal peptide (tat-type signal) is located at residues 1-31 (MALSRRDFLKSSAAAAAASAVGLSVPKEVEA). The 4Fe-4S Mo/W bis-MGD-type domain maps to 40–96 (WRWDKAVCRFCGTGCGIMIATKDDRIVAVKGDPLAPVNRGLNCIKGYFTAKIMYGAD). Positions 47, 50, 54, and 82 each coordinate [4Fe-4S] cluster. Residues Lys84, Gln152, Asn177, Cys181, 214 to 221 (WGSNMAEM), 246 to 250 (STYTH), Met424, Gln428, Asn534, 559 to 560 (SD), Lys582, Asp609, and 826 to 835 (TGRVLEHWHS) each bind Mo-bis(molybdopterin guanine dinucleotide). Position 902 (Trp902) interacts with substrate. Residues Asn910 and Lys927 each coordinate Mo-bis(molybdopterin guanine dinucleotide).

This sequence belongs to the prokaryotic molybdopterin-containing oxidoreductase family. NasA/NapA/NarB subfamily. As to quaternary structure, component of the periplasmic nitrate reductase NapAB complex composed of NapA and NapB. Requires [4Fe-4S] cluster as cofactor. Mo-bis(molybdopterin guanine dinucleotide) is required as a cofactor. Post-translationally, predicted to be exported by the Tat system. The position of the signal peptide cleavage has not been experimentally proven.

It is found in the periplasm. It carries out the reaction 2 Fe(II)-[cytochrome] + nitrate + 2 H(+) = 2 Fe(III)-[cytochrome] + nitrite + H2O. Its function is as follows. Catalytic subunit of the periplasmic nitrate reductase complex NapAB. Receives electrons from NapB and catalyzes the reduction of nitrate to nitrite. The sequence is that of Periplasmic nitrate reductase from Nitratiruptor sp. (strain SB155-2).